We begin with the raw amino-acid sequence, 1179 residues long: Stress response protein NST1 (1179 aa).

7 disordered regions span residues 1–64 (MSET…LNDP), 147–189 (TVNT…SNSS), 255–351 (KRQQ…NHSH), 537–619 (AAWI…EEEK), 660–819 (EAEE…DISQ), 928–947 (SSQA…PQLS), and 957–997 (SLSQ…VWNP). Positions 10–22 (DVSKFKNGDDVHF) are enriched in basic and acidic residues. Polar residues predominate over residues 24–38 (YNSTTNDQTINSTNV). The segment covering 39 to 53 (QKKKKKKKSKNKHKG) has biased composition (basic residues). A compositionally biased stretch (low complexity) spans 149–178 (NTSNNHQNNSNTQGGSTSTSGGALNGSSTN). The span at 262–278 (YKQERDAHHDHHNHEPG) shows a compositional bias: basic and acidic residues. A compositionally biased stretch (low complexity) spans 282–299 (SDTGSSGDYDGSTQQDQQ). The segment covering 300-347 (HQYEHEIEHAFQEDEHEDECGHKNDHSHSHSHSHTENHNHSHSYDPNH) has biased composition (basic and acidic residues). A compositionally biased stretch (acidic residues) spans 564 to 616 (ELEEELNDEYDEVDEDDDEGEEEGEEEEEELDDEEFEEDEEEDASDTESEISE). Positions 648 to 810 (SQDRTRTLIE…KSAKKQDHKE (163 aa)) form a coiled coil. Composition is skewed to basic and acidic residues over residues 663–681 (ENAK…EKAK) and 690–812 (AKEE…KETG). Positions 957-977 (SLSQNSLSSNANENLNTNPLN) are enriched in low complexity.

The protein belongs to the NST1 family.

It is found in the cytoplasm. Functionally, may act as a negative regulator of salt tolerance. The chain is Stress response protein NST1 (NST1) from Debaryomyces hansenii (strain ATCC 36239 / CBS 767 / BCRC 21394 / JCM 1990 / NBRC 0083 / IGC 2968) (Yeast).